A 500-amino-acid chain; its full sequence is Putative glucokinase-2 (500 aa).

Position 2 is an N-acetylserine (Ser2). Phosphoserine is present on Ser2. The region spanning 12 to 498 is the Hexokinase domain; that stretch reads EALEDAVVEI…SGVGAALCAL (487 aa). The tract at residues 74–217 is hexokinase small subdomain; sequence NGTERGVLLA…LSMINVVALT (144 aa). Lys110 is a binding site for ATP. Positions 159 to 185 are glucose-binding; it reads KMGFTFSYPVDQTSLSSGTLIRWTKSF. The segment at 218–487 is hexokinase large subdomain; sequence NDTVGTFLSH…RKIHLRLAKD (270 aa). Phosphoserine is present on Ser470. 487 to 492 provides a ligand contact to ATP; sequence DGSGVG.

Belongs to the hexokinase family.

Its subcellular location is the cytoplasm. The enzyme catalyses D-glucose + ATP = D-glucose 6-phosphate + ADP + H(+). Its pathway is carbohydrate degradation; glycolysis; D-glyceraldehyde 3-phosphate and glycerone phosphate from D-glucose: step 1/4. In terms of biological role, putative glucokinase involved in phosphorylation of aldohexoses and glucose uptake. Involved in sporulation. Required for the full activation of the early meiotic inducer IME1. This Saccharomyces cerevisiae (strain ATCC 204508 / S288c) (Baker's yeast) protein is Putative glucokinase-2 (EMI2).